The following is a 142-amino-acid chain: Transcription antitermination protein NusB (142 aa).

The protein belongs to the NusB family.

In terms of biological role, involved in transcription antitermination. Required for transcription of ribosomal RNA (rRNA) genes. Binds specifically to the boxA antiterminator sequence of the ribosomal RNA (rrn) operons. This chain is Transcription antitermination protein NusB, found in Roseiflexus castenholzii (strain DSM 13941 / HLO8).